The chain runs to 254 residues: 2,3-bisphosphoglycerate-dependent phosphoglycerate mutase (254 aa).

Residues 15–22 (RHGQSEWN), 28–29 (TG), arginine 67, 94–97 (ERHY), lysine 105, 121–122 (RR), and 188–189 (GN) contribute to the substrate site. Histidine 16 serves as the catalytic Tele-phosphohistidine intermediate. The active-site Proton donor/acceptor is the glutamate 94.

This sequence belongs to the phosphoglycerate mutase family. BPG-dependent PGAM subfamily.

The catalysed reaction is (2R)-2-phosphoglycerate = (2R)-3-phosphoglycerate. It functions in the pathway carbohydrate degradation; glycolysis; pyruvate from D-glyceraldehyde 3-phosphate: step 3/5. Its function is as follows. Catalyzes the interconversion of 2-phosphoglycerate and 3-phosphoglycerate. This Corynebacterium jeikeium (strain K411) protein is 2,3-bisphosphoglycerate-dependent phosphoglycerate mutase.